A 376-amino-acid chain; its full sequence is MYSAISEKISETITLQRQTSSRYIEFFVFRNVDINELWTTDISEDKTHDVWPAVNEKSFKKFLENELTSYQRPIPLLGIPQNGTVSKTCKKEKQRETDCVNYERKRGNPVTFYPRHRAKRNANTDTCISEEPSILVSHHRNSKMDVFMDTNKITLVNRELIWVPHDQVRIVKLDISLYIPDGFFGVITGHSNDVFCECVTEIITDETDISVFLMNLSEHSLMLLPGDVEFSINFLPCYIPEPWEMINLSPPEFAIFHLKASREFIAKPNSYTIQYFDAMYVCADELKALMIPSKEIAKLGLLIETYIWNKDTIPSIKIFNSTRKTIYIPTGICIARIIFTCGHFCLSLMPERAINRLQVLDANSSFLFHYAASNNA.

It belongs to the dUTPase family. Mg(2+) is required as a cofactor.

The enzyme catalyses dUTP + H2O = dUMP + diphosphate + H(+). Functionally, involved in nucleotide metabolism: produces dUMP, the immediate precursor of thymidine nucleotides and decreases the intracellular concentration of dUTP to avoid uracil incorporation into viral DNA. The protein is Deoxyuridine 5'-triphosphate nucleotidohydrolase of Homo sapiens (Human).